Here is a 354-residue protein sequence, read N- to C-terminus: MSEQKKRLLVMAGGTGGHVFPAIAVAQYLQQQGWDICWLGTADRMEAQLVPKHHIPIQFIQISGLRGKGIKALLSAPFSIFRAILQARKIIKAYQPHAVLGMGGYVSGPGGIAAKLCGIPVILHEQNAVAGLTNSWLAKIARRVLQAFPTAFPNAEVVGNPVRQTLFSQPTPEQRFAGREGKLRVLVVGGSQGARVLNQTLPNVVAQLSDKLEVRHQVGQGAVEQVTTLYPEHASVTITEFIDNMADAYAWADIVICRSGALTVSELAAVGAAAIFVPFQHKDQQQYLNAKYLADAGAATIIPQAELTAEKLVSVLTQFDRETLQQMAIKAKAMATPLAAQRVAEVIIEEANQD.

Residues 15 to 17, N127, R163, S191, I242, 261 to 266, and Q286 contribute to the UDP-N-acetyl-alpha-D-glucosamine site; these read TGG and ALTVSE.

This sequence belongs to the glycosyltransferase 28 family. MurG subfamily.

The protein localises to the cell inner membrane. It carries out the reaction di-trans,octa-cis-undecaprenyl diphospho-N-acetyl-alpha-D-muramoyl-L-alanyl-D-glutamyl-meso-2,6-diaminopimeloyl-D-alanyl-D-alanine + UDP-N-acetyl-alpha-D-glucosamine = di-trans,octa-cis-undecaprenyl diphospho-[N-acetyl-alpha-D-glucosaminyl-(1-&gt;4)]-N-acetyl-alpha-D-muramoyl-L-alanyl-D-glutamyl-meso-2,6-diaminopimeloyl-D-alanyl-D-alanine + UDP + H(+). Its pathway is cell wall biogenesis; peptidoglycan biosynthesis. Its function is as follows. Cell wall formation. Catalyzes the transfer of a GlcNAc subunit on undecaprenyl-pyrophosphoryl-MurNAc-pentapeptide (lipid intermediate I) to form undecaprenyl-pyrophosphoryl-MurNAc-(pentapeptide)GlcNAc (lipid intermediate II). The sequence is that of UDP-N-acetylglucosamine--N-acetylmuramyl-(pentapeptide) pyrophosphoryl-undecaprenol N-acetylglucosamine transferase from Pasteurella multocida (strain Pm70).